The following is a 697-amino-acid chain: Potassium channel KAT2 (697 aa).

Over 1 to 63 (MSISCTRNFF…PFDPRFRGWE (63 aa)) the chain is Cytoplasmic. The chain crosses the membrane as a helical span at residues 64 to 84 (MWLVILVIYSAWICPFEFAFI). Topologically, residues 85 to 91 (TYKKDAL) are extracellular. A helical transmembrane segment spans residues 92–112 (FIIDNIVNGFFAIDIILTFFV). Over 113–134 (AYLDSHSYLLVDKPKKIAIRYL) the chain is Cytoplasmic. The chain crosses the membrane as a helical span at residues 135–155 (STWFAFDVCSTAPFQSLSLLF). Topologically, residues 156–165 (KYNGSEIGFR) are extracellular. Asparagine 158 carries N-linked (GlcNAc...) asparagine glycosylation. A helical; Voltage-sensor membrane pass occupies residues 166–186 (VLSMLRLWRLRRVSSLFARLE). The Cytoplasmic segment spans residues 187-200 (KDIRFNYFWTRCTK). The helical transmembrane segment at 201 to 221 (LISVTLFAVHCAGCFAYLIAD) threads the bilayer. The Extracellular segment spans residues 222–248 (QYHDPTKTWIGAVYPNFKETSVWSRYV). Positions 249-268 (TALYWSITTLTTTGYGDLHA) form an intramembrane region, pore-forming. Residues 269 to 272 (ENPR) lie on the Extracellular side of the membrane. A helical transmembrane segment spans residues 273–293 (EMLFFVFFMLFNLGFTSYLIG). Residues 294 to 697 (NMTNLVVHWT…HLYILINENS (404 aa)) are Cytoplasmic-facing. 377 to 496 (LFHGVSRNFL…RVIMNNLFMK (120 aa)) is an a nucleoside 3',5'-cyclic phosphate binding site. The region spanning 629–697 (RVTIHLKSRD…HLYILINENS (69 aa)) is the KHA domain.

Belongs to the potassium channel family. Plant (TC 1.A.1.4) subfamily. In terms of assembly, the potassium channel is probably composed of a homo- or heterotetrameric complex of pore-forming subunits. May interact with KAT1. Interacts with SLAC1. Expressed in guard cells of hypocotyls, stems leaves and petioles. Detected also in the phloem of minor veins and in flower at a lower level.

It localises to the membrane. Highly selective inward-rectifying potassium channel. This voltage-dependent channel could mediate long-term potassium influx into guard cells leading to stomatal opening. Assuming opened or closed conformations in response to the voltage difference across the membrane, the channel is activated by hyperpolarization. The channel activity is enhanced upon external acidification. The protein is Potassium channel KAT2 (KAT2) of Arabidopsis thaliana (Mouse-ear cress).